Reading from the N-terminus, the 938-residue chain is Ankyrin repeat and LEM domain-containing protein 2 (938 aa).

Topologically, residues 1-12 (MLWPRLAAAEWA) are lumenal. The chain crosses the membrane as a helical; Signal-anchor for type III membrane protein span at residues 13-32 (ALAWELLGASVLLIAVRWLV). Topologically, residues 33–938 (RRLGPRPGGL…MARLAELAAL (906 aa)) are cytoplasmic. The LEM domain occupies 69–113 (LARLKLLNPDDLREEIVKAGLKCGPITSTTRFIFEKKLAQALLEQ). Phosphoserine is present on residues serine 259 and serine 268. Residues 411–440 (GYDTPLHFACKFGNADVVNVLSSHHLIVKN) form an ANK repeat. Phosphoserine is present on residues serine 488, serine 496, serine 512, and serine 528. The segment covering 609–627 (GKKAQQETGEREASCRDKA) has biased composition (basic and acidic residues). The segment at 609-636 (GKKAQQETGEREASCRDKATTSGSNSIS) is disordered. Serine 662, serine 804, serine 896, and serine 914 each carry phosphoserine. Residues 870-924 (RQSWPSPAVKGRFKSQLPDLSGPHSYSPGRNSVAGSNPAKPGLGSPGRYSPVHGS) are disordered.

This sequence belongs to the ANKLE2 family. In terms of assembly, interacts with BAF/BANF1. Interacts with protein phosphatase 2A (PP2A) components PPP2C (PPP2CA or PPP2CB) and PPP2R1A. As to quaternary structure, (Microbial infection) May interact with non-structural protein 4A/NS4A from Zika virus strains Mr-766 or French Polynesia 10087PF/2013; the interaction may inhibit ANKLE2 function and contribute to defects in brain development, such as microcephaly.

It is found in the endoplasmic reticulum membrane. Its function is as follows. Involved in mitotic nuclear envelope reassembly by promoting dephosphorylation of BAF/BANF1 during mitotic exit. Coordinates the control of BAF/BANF1 dephosphorylation by inhibiting VRK1 kinase and promoting dephosphorylation of BAF/BANF1 by protein phosphatase 2A (PP2A), thereby facilitating nuclear envelope assembly. May regulate nuclear localization of VRK1 in non-dividing cells. It is unclear whether it acts as a real PP2A regulatory subunit or whether it is involved in recruitment of the PP2A complex. Involved in brain development. This chain is Ankyrin repeat and LEM domain-containing protein 2 (ANKLE2), found in Homo sapiens (Human).